A 354-amino-acid polypeptide reads, in one-letter code: Hydrophobic dipeptide epimerase (354 aa).

Residues T134, K159, and 159–161 each bind substrate; that span reads KIK. D189 serves as a coordination point for Mg(2+). Substrate is bound at residue N191. Mg(2+) contacts are provided by E215 and D240. Substrate is bound by residues K264, 292-295, and 318-320; these read CMAE and DLD.

The protein belongs to the mandelate racemase/muconate lactonizing enzyme family. Mg(2+) is required as a cofactor.

Functionally, catalyzes the epimerization of L-Ile-L-Tyr to L-Ile-D-Tyr (in vitro). Catalyzes the epimerization of dipeptides, with a preference for substrates with a hydrophobic or basic amino acid in the first position, followed by an aromatic residue in the second position. Has epimerase activity with L-Ile-L-Tyr, L-Val-L-Tyr and L-Arg-L-Tyr (in vitro). The chain is Hydrophobic dipeptide epimerase from Enterococcus faecalis (strain ATCC 700802 / V583).